A 384-amino-acid chain; its full sequence is Prostaglandin E synthase 2 (384 aa).

Topologically, residues 1–56 (MAQAARLSWVLVSSRCALTEGLLTRPWQPLSAQSRAGFTRVAAGSRGAAVRKGSPR) are lumenal. Residues 57 to 73 (LLGAAALALGGALGLYH) traverse the membrane as a helical segment. At 74 to 384 (TVRWHQRSQD…VHHVNPSCKD (311 aa)) the chain is on the cytoplasmic side. The 104-residue stretch at 89–192 (SAAQLPLSNS…EVITYYPPMK (104 aa)) folds into the Glutaredoxin domain. Residues valine 147 and 163–164 (DS) each bind glutathione. Residues 262 to 376 (YIVREGKFGA…RAIEEAPSVH (115 aa)) enclose the GST C-terminal domain.

This sequence belongs to the GST superfamily. Homodimer. Interacts with EXOSC10. May interact with CEBPB. Post-translationally, synthesized as a Golgi membrane-associated protein, and the proteolytic removal of the N-terminal hydrophobic domain leads to the formation of a mature cytosolic enzyme. In terms of tissue distribution, widely expressed. Expressed in brain, heart, liver, colon and lung.

Its subcellular location is the golgi apparatus membrane. It is found in the nucleus. The protein resides in the cytoplasm. The catalysed reaction is prostaglandin H2 = prostaglandin E2. The enzyme catalyses prostaglandin H2 = (12S)-hydroxy-(5Z,8E,10E)-heptadecatrienoate + malonaldehyde. The protein operates within lipid metabolism; prostaglandin biosynthesis. With respect to regulation, isomerase activity is increased by sulfhydril compounds. Dithiothreitol (DTT) is most effective, followed by glutathione (GSH) and 2-mercaptoethanol. Functionally, isomerase that catalyzes the conversion of PGH2 into the more stable prostaglandin E2 (PGE2) (in vitro). The biological function and the GSH-dependent property of PTGES2 is still under debate. In vivo, PTGES2 could form a complex with GSH and heme and would not participate in PGE2 synthesis but would catalyze the degradation of prostaglandin E2 H2 (PGH2) to 12(S)-hydroxy-5(Z),8(E),10(E)-heptadecatrienoic acid (HHT) and malondialdehyde (MDA). May also have transactivation activity toward IFN-gamma (IFNG), possibly via an interaction with CEBPB; however, the relevance of transcription activation activity remains unclear. In Mus musculus (Mouse), this protein is Prostaglandin E synthase 2 (Ptges2).